The sequence spans 364 residues: Chorismate synthase (364 aa).

Arginine 48 serves as a coordination point for NADP(+). FMN-binding positions include 131 to 133 (RAS), 243 to 244 (NA), glycine 288, 303 to 307 (KPTSS), and arginine 329.

Belongs to the chorismate synthase family. In terms of assembly, homotetramer. The cofactor is FMNH2.

The enzyme catalyses 5-O-(1-carboxyvinyl)-3-phosphoshikimate = chorismate + phosphate. It participates in metabolic intermediate biosynthesis; chorismate biosynthesis; chorismate from D-erythrose 4-phosphate and phosphoenolpyruvate: step 7/7. Functionally, catalyzes the anti-1,4-elimination of the C-3 phosphate and the C-6 proR hydrogen from 5-enolpyruvylshikimate-3-phosphate (EPSP) to yield chorismate, which is the branch point compound that serves as the starting substrate for the three terminal pathways of aromatic amino acid biosynthesis. This reaction introduces a second double bond into the aromatic ring system. This Bartonella bacilliformis (strain ATCC 35685 / KC583 / Herrer 020/F12,63) protein is Chorismate synthase.